The sequence spans 1042 residues: Serine/threonine-protein kinase LATS2 (1042 aa).

Residues 23–44 (REGLKQPSKASTQGLLVGPNSD) are disordered. Positions 30-44 (SKASTQGLLVGPNSD) are enriched in polar residues. Serine 82 is subject to Phosphoserine; by AURKA. In terms of domain architecture, UBA spans 97-138 (EVNRQMLQELVNAGCDQEMAGRALKQTGSRSIEAALEYISKM). Residues 100–140 (RQMLQELVNAGCDQEMAGRALKQTGSRSIEAALEYISKMGY) form an interaction with ubiquitinated AMOTL2 region. The segment at 237–282 (HFPGTHYGRGHLLSEQPGYGVQRSSSFQNKTPPDAYSSMAKAQGGP) is disordered. Residues 258–267 (QRSSSFQNKT) show a composition bias toward polar residues. The residue at position 267 (threonine 267) is a Phosphothreonine. The residue at position 362 (serine 362) is a Phosphoserine. 3 disordered regions span residues 378–399 (RAGPSRTNSFNNPQPEPSLPAP), 442–481 (PATESLETKEGSAGPHPLDVDYGGSERRCPPPPYPKHLLL), and 501–550 (QSLR…KRES). The short motif at 472-475 (PPPY) is the PPxY motif element. Residues 507–530 (TEQDRSDKSHKGAKGDKAGRDKKQ) show a composition bias toward basic and acidic residues. Serine 534 bears the Phosphoserine mark. A compositionally biased stretch (basic and acidic residues) spans 541–550 (NSRDEEKRES). A Protein kinase domain is found at 626–931 (FVKIKTLGIG…ADDLKAHPFF (306 aa)). ATP is bound by residues 632–640 (LGIGAFGEV) and lysine 655. Aspartate 749 acts as the Proton acceptor in catalysis. In terms of domain architecture, AGC-kinase C-terminal spans 932–1010 (NTIDFSRDIR…RRFFDDNGYP (79 aa)). A Phosphothreonine modification is found at threonine 999. The tract at residues 1014–1042 (PKPSEPAESADPGDADLEGAAEGCQPVYV) is disordered.

It belongs to the protein kinase superfamily. AGC Ser/Thr protein kinase family. Interacts with and is phosphorylated by AURKA. Binds to AR. Interacts with AJUBA during mitosis and this complex regulates organization of the spindle apparatus through recruitment of gamma-tubulin to the centrosome. Interacts (via PPxY motif) with YAP1 (via WW domains). Interacts with MOB1A and MOB1B. Interacts with LIMD1, WTIP and AJUBA. Interacts with SNAI1. Interacts with WWC1, WWC2 and WWC3 (via their WW domains). Interacts (via UBA domain) with ubiquitinated AMOTL2; the interaction promotes LATS2 phosphorylation of YAP1. The cofactor is Mg(2+). Autophosphorylated and phosphorylated during M-phase and the G1/S-phase of the cell cycle. Phosphorylated and activated by STK3/MST2. Phosphorylated by MAP4Ks; in parallel to STK3/MST2 and resulting to its activation. Phosphorylation by NUAK2 may regulate its activity in phosphorylation and inactivation YAP1. As to expression, expressed at high levels in ovary and testis and at lower levels in all other tissues examined.

It is found in the cytoplasm. The protein resides in the cytoskeleton. The protein localises to the microtubule organizing center. Its subcellular location is the centrosome. It localises to the spindle pole. It is found in the nucleus. The enzyme catalyses L-seryl-[protein] + ATP = O-phospho-L-seryl-[protein] + ADP + H(+). The catalysed reaction is L-threonyl-[protein] + ATP = O-phospho-L-threonyl-[protein] + ADP + H(+). Negative regulator of YAP1 in the Hippo signaling pathway that plays a pivotal role in organ size control and tumor suppression by restricting proliferation and promoting apoptosis. The core of this pathway is composed of a kinase cascade wherein STK3/MST2 and STK4/MST1, in complex with its regulatory protein SAV1, phosphorylates and activates LATS1/2 in complex with its regulatory protein MOB1, which in turn phosphorylates and inactivates YAP1 oncoprotein and WWTR1/TAZ. Phosphorylation of YAP1 by LATS2 inhibits its translocation into the nucleus to regulate cellular genes important for cell proliferation, cell death, and cell migration. Also phosphorylates YAP1 in response to cell contact inhibition-driven WWP1 ubiquitination of AMOTL2, which results in LATS2 activation. Acts as a tumor suppressor which plays a critical role in centrosome duplication, maintenance of mitotic fidelity and genomic stability. Negatively regulates G1/S transition by down-regulating cyclin E/CDK2 kinase activity. Negative regulator of the androgen receptor. Phosphorylates SNAI1 in the nucleus leading to its nuclear retention and stabilization, which enhances its epithelial-mesenchymal transition and tumor cell invasion/migration activities. This tumor-promoting activity is independent of its effects upon YAP1 or WWTR1/TAZ. Acts as an activator of the NLRP3 inflammasome by mediating phosphorylation of 'Ser-265' of NLRP3 following NLRP3 palmitoylation, promoting NLRP3 activation by NEK7. This is Serine/threonine-protein kinase LATS2 from Mus musculus (Mouse).